We begin with the raw amino-acid sequence, 266 residues long: NADP-dependent mannitol dehydrogenase (266 aa).

The NADP(+) site is built by threonine 31, isoleucine 33, asparagine 107, and arginine 140. Catalysis depends on serine 159, which acts as the Proton donor. NADP(+) is bound by residues tyrosine 174, lysine 178, isoleucine 206, and threonine 208. Tyrosine 174 serves as the catalytic Proton acceptor. The active-site Lowers pKa of active site Tyr is the lysine 178.

It belongs to the short-chain dehydrogenases/reductases (SDR) family. Homotetramer.

It localises to the vacuole. The catalysed reaction is D-mannitol + NADP(+) = D-fructose + NADPH + H(+). This is NADP-dependent mannitol dehydrogenase from Alternaria alternata (Alternaria rot fungus).